The following is a 322-amino-acid chain: uncharacterized protein (322 aa).

Residues 1–17 show a composition bias toward low complexity; that stretch reads MASMAAAIAASRSAVMS. The segment at 1–22 is disordered; it reads MASMAAAIAASRSAVMSGNRPL. An N-acetylalanine modification is found at Ala-2. Ser-37 carries the post-translational modification Phosphoserine. A disordered region spans residues 81–104; sequence AAAADAGDVRDPARFPGLRGPTGQ. Residue Ser-130 is modified to Phosphoserine. Polar residues-rich tracts occupy residues 142–153 and 161–177; these read QEPSAATVTSDA and QGTQGSKPAQSSRSSSL. Residues 142–301 are disordered; it reads QEPSAATVTS…DDDALFSEPA (160 aa). Position 176 is a phosphoserine (Ser-176). The span at 183–203 shows a compositional bias: basic and acidic residues; sequence ARKEEEAPFWKINAERSREGP. A compositionally biased stretch (polar residues) spans 245-255; that stretch reads QEQQTLPSVSA.

Its subcellular location is the cytoplasm. This is an uncharacterized protein from Mus musculus (Mouse).